The chain runs to 216 residues: Purine nucleoside phosphorylase DeoD-type (216 aa).

Phosphate contacts are provided by residues Arg4, Arg23, and 67-70 (RVGT). A purine D-ribonucleoside-binding positions include 159–161 (EME) and 183–184 (SD). The active-site Proton donor is the Asp184.

Belongs to the PNP/UDP phosphorylase family. As to quaternary structure, homohexamer; trimer of homodimers.

It carries out the reaction a purine D-ribonucleoside + phosphate = a purine nucleobase + alpha-D-ribose 1-phosphate. The enzyme catalyses a purine 2'-deoxy-D-ribonucleoside + phosphate = a purine nucleobase + 2-deoxy-alpha-D-ribose 1-phosphate. Catalyzes the reversible phosphorolytic breakdown of the N-glycosidic bond in the beta-(deoxy)ribonucleoside molecules, with the formation of the corresponding free purine bases and pentose-1-phosphate. This Streptococcus thermophilus protein is Purine nucleoside phosphorylase DeoD-type.